A 494-amino-acid chain; its full sequence is 5'-3' exonuclease PLD3 (494 aa).

Over 1-37 (MNPKVEYKQIQSHDEAENQVLQHECHQAKARKYYRCA) the chain is Cytoplasmic. The helical; Signal-anchor for type II membrane protein transmembrane segment at 38 to 58 (VVIAIIITLLFCVLASQLLLF) threads the bilayer. At 59 to 494 (PLFSITSQTT…LSSWKEKCIF (436 aa)) the chain is on the lumenal side. Asparagine 100 carries an N-linked (GlcNAc...) asparagine glycan. The region spanning 198 to 225 (TDGVLHTKFWVVDSEHFYIGSANMDWRS) is the PLD phosphodiesterase 1 domain. Residues histidine 203, lysine 205, and aspartate 210 contribute to the active site. Asparagine 238, asparagine 260, asparagine 270, asparagine 286, and asparagine 389 each carry an N-linked (GlcNAc...) asparagine glycan. The PLD phosphodiesterase 2 domain maps to 413–439 (YARVNHNKYMVTDRVAYIGTSNWSGDY). Catalysis depends on residues histidine 418, lysine 420, and aspartate 425. 3 N-linked (GlcNAc...) asparagine glycosylation sites follow: asparagine 434, asparagine 451, and asparagine 477.

Belongs to the phospholipase D family. N-glycosylated. In terms of processing, proteolytically processed to a soluble form that is stable within endosomes and lysosomes. During transport through the secretory pathway becomes proteolysed by cysteine proteases, thereby releasing a stable soluble lysosomal lumenal polypeptide, whereas the transmembrane-bound fragment is rapidly degraded. Its transport route to lysosomes involves ubiquitination and the ESCRT complex. Post-translationally, ubiquitinated. Ubiquitination mediates sorting into lysosomes.

It is found in the endoplasmic reticulum membrane. The protein localises to the lysosome lumen. The protein resides in the early endosome membrane. It localises to the late endosome membrane. Its subcellular location is the golgi apparatus membrane. It is found in the endosome membrane. It catalyses the reaction Exonucleolytic cleavage in the 5'- to 3'-direction to yield nucleoside 3'-phosphates.. 5'-&gt;3' DNA exonuclease which digests single-stranded DNA (ssDNA). Regulates inflammatory cytokine responses via the degradation of nucleic acids, by reducing the concentration of ssDNA able to stimulate TLR9, a nucleotide-sensing receptor in collaboration with PLD4. May be important in myotube formation. Plays a role in lysosomal homeostasis. Involved in the regulation of endosomal protein sorting. The sequence is that of 5'-3' exonuclease PLD3 (pld3) from Xenopus tropicalis (Western clawed frog).